Consider the following 816-residue polypeptide: Probable E3 ubiquitin-protein ligase hulA (816 aa).

A C2 domain is found at 1–112 (MGSNLPAQPN…QMGGDEMLTR (112 aa)). 2 disordered regions span residues 134–238 (NLST…GWER) and 254–354 (RTTT…YFVD). The segment covering 160 to 178 (VPQVAPSSSHPAASGAAPV) has biased composition (low complexity). Residues 181–192 (SASNPSLNPQRV) are compositionally biased toward polar residues. Over residues 193–213 (PSTTRPSSTAAPASAAGAAAS) the composition is skewed to low complexity. Polar residues-rich tracts occupy residues 214–227 (NTHG…SFED) and 254–267 (RTTT…NYNE). One can recognise a WW 1 domain in the interval 230–263 (GRLPAGWERREDNLGRTYYVDHNTRTTTWTRPSS). Residues 268–295 (HAQRSQREANMQLERRAHQSRMLPEDRT) show a composition bias toward basic and acidic residues. The segment covering 296 to 310 (GANSPNLPESSQQAH) has biased composition (polar residues). The span at 325-334 (ATGATTAGTG) shows a compositional bias: low complexity. WW domains are found at residues 334–367 (GELP…DPRR) and 394–427 (GPLP…DPRL). In terms of domain architecture, HECT spans 483-816 (SASDLKKRLM…VEETLGFGQE (334 aa)). Cysteine 784 serves as the catalytic Glycyl thioester intermediate.

It belongs to the RSP5/NEDD4 family. Interacts with creD.

The protein resides in the cytoplasm. It catalyses the reaction S-ubiquitinyl-[E2 ubiquitin-conjugating enzyme]-L-cysteine + [acceptor protein]-L-lysine = [E2 ubiquitin-conjugating enzyme]-L-cysteine + N(6)-ubiquitinyl-[acceptor protein]-L-lysine.. Its pathway is protein modification; protein ubiquitination. Functionally, E3 ubiquitin-protein ligase which accepts ubiquitin from an E2 ubiquitin-conjugating enzyme in the form of a thioester and then directly transfers the ubiquitin to targeted substrates. Probably involved in the regulatory network controlling carbon source utilization. The sequence is that of Probable E3 ubiquitin-protein ligase hulA (hulA) from Neosartorya fischeri (strain ATCC 1020 / DSM 3700 / CBS 544.65 / FGSC A1164 / JCM 1740 / NRRL 181 / WB 181) (Aspergillus fischerianus).